A 411-amino-acid polypeptide reads, in one-letter code: Anaerobic nitric oxide reductase flavorubredoxin homolog (411 aa).

Residues 30–210 (LRGSSYNSYL…PFSRLVTPKI (181 aa)) are zinc metallo-hydrolase. Fe cation-binding residues include His-79, Glu-81, Asp-83, His-147, Asp-166, His-227, Cys-360, Cys-363, Cys-393, and Cys-396. One can recognise a Rubredoxin-like domain in the interval 355–406 (GPRMQCSVCQWIYDPAKGEPMQDVAPGTPWSEVPDNFLCPECSLGKDVFDEL).

This sequence in the N-terminal section; belongs to the zinc metallo-hydrolase group 3 family. Homotetramer. Fe cation serves as cofactor.

The protein localises to the cytoplasm. It functions in the pathway nitrogen metabolism; nitric oxide reduction. Its function is as follows. Anaerobic nitric oxide reductase; uses NADH to detoxify nitric oxide (NO), protecting several 4Fe-4S NO-sensitive enzymes. Has at least 2 reductase partners, only one of which (NorW, flavorubredoxin reductase) has been identified. NO probably binds to the di-iron center. Also able to function as an aerobic oxygen reductase. This chain is Anaerobic nitric oxide reductase flavorubredoxin homolog, found in Escherichia coli O157:H7.